A 159-amino-acid polypeptide reads, in one-letter code: Large ribosomal subunit protein uL15 (159 aa).

Residues methionine 1–asparagine 39 form a disordered region. A compositionally biased stretch (gly residues) spans arginine 21 to valine 35.

It belongs to the universal ribosomal protein uL15 family. As to quaternary structure, part of the 50S ribosomal subunit.

Its function is as follows. Binds to the 23S rRNA. This is Large ribosomal subunit protein uL15 from Hyphomonas neptunium (strain ATCC 15444).